We begin with the raw amino-acid sequence, 265 residues long: 4-hydroxy-tetrahydrodipicolinate reductase (265 aa).

9-14 (GPRGRM) is an NAD(+) binding site. Arg37 contacts NADP(+). NAD(+)-binding positions include 98–100 (GTT) and 124–127 (APNF). The Proton donor/acceptor role is filled by His154. A (S)-2,3,4,5-tetrahydrodipicolinate-binding site is contributed by His155. The active-site Proton donor is Lys158. 164–165 (GT) contacts (S)-2,3,4,5-tetrahydrodipicolinate.

It belongs to the DapB family.

It is found in the cytoplasm. It catalyses the reaction (S)-2,3,4,5-tetrahydrodipicolinate + NAD(+) + H2O = (2S,4S)-4-hydroxy-2,3,4,5-tetrahydrodipicolinate + NADH + H(+). The catalysed reaction is (S)-2,3,4,5-tetrahydrodipicolinate + NADP(+) + H2O = (2S,4S)-4-hydroxy-2,3,4,5-tetrahydrodipicolinate + NADPH + H(+). Its pathway is amino-acid biosynthesis; L-lysine biosynthesis via DAP pathway; (S)-tetrahydrodipicolinate from L-aspartate: step 4/4. In terms of biological role, catalyzes the conversion of 4-hydroxy-tetrahydrodipicolinate (HTPA) to tetrahydrodipicolinate. This is 4-hydroxy-tetrahydrodipicolinate reductase from Geobacillus kaustophilus (strain HTA426).